The primary structure comprises 619 residues: 1-deoxy-D-xylulose-5-phosphate synthase (619 aa).

Thiamine diphosphate contacts are provided by residues His74 and 115-117; that span reads GHS. Mg(2+) is bound at residue Asp146. Residues 147-148, Asn175, Tyr285, and Glu365 contribute to the thiamine diphosphate site; that span reads GA. Residue Asn175 participates in Mg(2+) binding.

This sequence belongs to the transketolase family. DXPS subfamily. In terms of assembly, homodimer. The cofactor is Mg(2+). It depends on thiamine diphosphate as a cofactor.

The enzyme catalyses D-glyceraldehyde 3-phosphate + pyruvate + H(+) = 1-deoxy-D-xylulose 5-phosphate + CO2. The protein operates within metabolic intermediate biosynthesis; 1-deoxy-D-xylulose 5-phosphate biosynthesis; 1-deoxy-D-xylulose 5-phosphate from D-glyceraldehyde 3-phosphate and pyruvate: step 1/1. Its function is as follows. Catalyzes the acyloin condensation reaction between C atoms 2 and 3 of pyruvate and glyceraldehyde 3-phosphate to yield 1-deoxy-D-xylulose-5-phosphate (DXP). This is 1-deoxy-D-xylulose-5-phosphate synthase from Clostridium perfringens (strain ATCC 13124 / DSM 756 / JCM 1290 / NCIMB 6125 / NCTC 8237 / Type A).